Consider the following 404-residue polypeptide: Acetylornithine/succinyldiaminopimelate aminotransferase (404 aa).

Pyridoxal 5'-phosphate contacts are provided by residues 108-109 (GA) and F141. R144 contacts N(2)-acetyl-L-ornithine. 226-229 (DEIQ) provides a ligand contact to pyridoxal 5'-phosphate. K255 bears the N6-(pyridoxal phosphate)lysine mark. T283 contacts N(2)-acetyl-L-ornithine. Position 284 (T284) interacts with pyridoxal 5'-phosphate.

It belongs to the class-III pyridoxal-phosphate-dependent aminotransferase family. ArgD subfamily. Homodimer. The cofactor is pyridoxal 5'-phosphate.

It is found in the cytoplasm. It catalyses the reaction N(2)-acetyl-L-ornithine + 2-oxoglutarate = N-acetyl-L-glutamate 5-semialdehyde + L-glutamate. It carries out the reaction N-succinyl-(2S,6S)-2,6-diaminopimelate + 2-oxoglutarate = (S)-2-succinylamino-6-oxoheptanedioate + L-glutamate. It functions in the pathway amino-acid biosynthesis; L-arginine biosynthesis; N(2)-acetyl-L-ornithine from L-glutamate: step 4/4. It participates in amino-acid biosynthesis; L-lysine biosynthesis via DAP pathway; LL-2,6-diaminopimelate from (S)-tetrahydrodipicolinate (succinylase route): step 2/3. Involved in both the arginine and lysine biosynthetic pathways. The chain is Acetylornithine/succinyldiaminopimelate aminotransferase from Buchnera aphidicola subsp. Schizaphis graminum (strain Sg).